Consider the following 131-residue polypeptide: MARVKRAVNAHKKRRSILKASKGYRGQRSRLYRKAKEQQLHSLNYAYRDRRARKGEFRKLWISRINAAARANDITYNRLIQGLKAAGVEVDRKNLADIAIADPAAFTALVDVARAALPEDVNAPSDSGEAA.

It belongs to the bacterial ribosomal protein bL20 family.

Functionally, binds directly to 23S ribosomal RNA and is necessary for the in vitro assembly process of the 50S ribosomal subunit. It is not involved in the protein synthesizing functions of that subunit. The sequence is that of Large ribosomal subunit protein bL20 from Mycolicibacterium paratuberculosis (strain ATCC BAA-968 / K-10) (Mycobacterium paratuberculosis).